The following is a 324-amino-acid chain: Putative transport protein TM_1187 (324 aa).

The next 8 membrane-spanning stretches (helical) occupy residues 12–32 (LYLV…TALI), 62–82 (ISNV…FPVI), 105–125 (IPGW…EGAL), 131–151 (IVGY…TAFI), 190–210 (GGQV…AFIF), 227–247 (FVPY…AFSV), 252–272 (GLLI…WVLA), and 285–305 (FIIL…GVLI).

Belongs to the autoinducer-2 exporter (AI-2E) (TC 2.A.86) family.

The protein resides in the cell membrane. This Thermotoga maritima (strain ATCC 43589 / DSM 3109 / JCM 10099 / NBRC 100826 / MSB8) protein is Putative transport protein TM_1187.